The primary structure comprises 951 residues: AP-1 complex subunit beta-1 (951 aa).

N6-acetyllysine is present on lysine 318. Tyrosine 574 is modified (3'-nitrotyrosine).

It belongs to the adaptor complexes large subunit family. As to quaternary structure, adaptor protein complex 1 (AP-1) is a heterotetramer composed of two large adaptins (gamma-type subunit AP1G1 and beta-type subunit AP1B1), a medium adaptin (mu-type subunit AP1M1 or AP1M2) and a small adaptin (sigma-type subunit AP1S1 or AP1S2 or AP1S3).

The protein localises to the cytoplasmic vesicle. Its subcellular location is the clathrin-coated vesicle membrane. It localises to the golgi apparatus. Subunit of clathrin-associated adaptor protein complex 1 that plays a role in protein sorting in the late-Golgi/trans-Golgi network (TGN) and/or endosomes. The AP complexes mediate both the recruitment of clathrin to membranes and the recognition of sorting signals within the cytosolic tails of transmembrane cargo molecules. The sequence is that of AP-1 complex subunit beta-1 (AP2B1) from Bos taurus (Bovine).